Consider the following 1141-residue polypeptide: DNA-directed RNA polymerase II subunit RPB2 (1141 aa).

Position 763 (Asp-763) interacts with Mg(2+). Zn(2+) is bound by residues Cys-1087, Cys-1090, Cys-1103, and Cys-1106. The C4-type zinc finger occupies 1087–1106 (CDFCGLLAMGGSKVNECKGC).

Belongs to the RNA polymerase beta chain family. In terms of assembly, component of the RNA polymerase II (Pol II) complex consisting of 12 subunits.

It localises to the nucleus. It carries out the reaction RNA(n) + a ribonucleoside 5'-triphosphate = RNA(n+1) + diphosphate. DNA-dependent RNA polymerase catalyzes the transcription of DNA into RNA using the four ribonucleoside triphosphates as substrates. Second largest component of RNA polymerase II which synthesizes mRNA precursors and many functional non-coding RNAs. Proposed to contribute to the polymerase catalytic activity and forms the polymerase active center together with the largest subunit. Pol II is the central component of the basal RNA polymerase II transcription machinery. It is composed of mobile elements that move relative to each other. RPB2 is part of the core element with the central large cleft, the clamp element that moves to open and close the cleft and the jaws that are thought to grab the incoming DNA template. This is DNA-directed RNA polymerase II subunit RPB2 (RPB2) from Encephalitozoon cuniculi (strain GB-M1) (Microsporidian parasite).